A 359-amino-acid polypeptide reads, in one-letter code: tRNA N6-adenosine threonylcarbamoyltransferase (359 aa).

The Fe cation site is built by His-115 and His-119. Residues 137–141 (LVSGG), Asp-170, Gly-183, and Asn-283 contribute to the substrate site. Asp-311 serves as a coordination point for Fe cation. The interval 328-359 (APDSLDLAPRSRWPLDEKSAPLIGTGRRGAKA) is disordered.

This sequence belongs to the KAE1 / TsaD family. Fe(2+) serves as cofactor.

The protein localises to the cytoplasm. The enzyme catalyses L-threonylcarbamoyladenylate + adenosine(37) in tRNA = N(6)-L-threonylcarbamoyladenosine(37) in tRNA + AMP + H(+). Its function is as follows. Required for the formation of a threonylcarbamoyl group on adenosine at position 37 (t(6)A37) in tRNAs that read codons beginning with adenine. Is involved in the transfer of the threonylcarbamoyl moiety of threonylcarbamoyl-AMP (TC-AMP) to the N6 group of A37, together with TsaE and TsaB. TsaD likely plays a direct catalytic role in this reaction. This is tRNA N6-adenosine threonylcarbamoyltransferase from Brucella anthropi (strain ATCC 49188 / DSM 6882 / CCUG 24695 / JCM 21032 / LMG 3331 / NBRC 15819 / NCTC 12168 / Alc 37) (Ochrobactrum anthropi).